The primary structure comprises 317 residues: Metaxin-1 (317 aa).

Glycyl lysine isopeptide (Lys-Gly) (interchain with G-Cter in ubiquitin) cross-links involve residues Lys38, Lys41, and Lys78. Residues Glu164–Arg184 form a helical membrane-spanning segment.

Belongs to the metaxin family. Interacts with MTX2/metaxin-2. Associates with the mitochondrial contact site and cristae organizing system (MICOS) complex, composed of at least MICOS10/MIC10, CHCHD3/MIC19, CHCHD6/MIC25, APOOL/MIC27, IMMT/MIC60, APOO/MIC23/MIC26 and QIL1/MIC13. This complex was also known under the names MINOS or MitOS complex. The MICOS complex associates with mitochondrial outer membrane proteins SAMM50, MTX1 and MTX2 (together described as components of the mitochondrial outer membrane sorting assembly machinery (SAM) complex) and DNAJC11, mitochondrial inner membrane protein TMEM11 and with HSPA9. The MICOS and SAM complexes together with DNAJC11 are part of a large protein complex spanning both membranes termed the mitochondrial intermembrane space bridging (MIB) complex. Interacts with ARMC1. Post-translationally, ubiquitinated by PRKN during mitophagy, leading to its degradation and enhancement of mitophagy. Deubiquitinated by USP30.

The protein localises to the mitochondrion outer membrane. Involved in transport of proteins into the mitochondrion. Essential for embryonic development. The sequence is that of Metaxin-1 (MTX1) from Sus scrofa (Pig).